The primary structure comprises 259 residues: 4-hydroxy-tetrahydrodipicolinate reductase (259 aa).

Residues G8–M13, G94–T96, and A120–F123 each bind NAD(+). Catalysis depends on H150, which acts as the Proton donor/acceptor. H151 is a binding site for (S)-2,3,4,5-tetrahydrodipicolinate. K154 acts as the Proton donor in catalysis. Position 160-161 (G160–T161) interacts with (S)-2,3,4,5-tetrahydrodipicolinate.

This sequence belongs to the DapB family.

Its subcellular location is the cytoplasm. It carries out the reaction (S)-2,3,4,5-tetrahydrodipicolinate + NAD(+) + H2O = (2S,4S)-4-hydroxy-2,3,4,5-tetrahydrodipicolinate + NADH + H(+). The catalysed reaction is (S)-2,3,4,5-tetrahydrodipicolinate + NADP(+) + H2O = (2S,4S)-4-hydroxy-2,3,4,5-tetrahydrodipicolinate + NADPH + H(+). It functions in the pathway amino-acid biosynthesis; L-lysine biosynthesis via DAP pathway; (S)-tetrahydrodipicolinate from L-aspartate: step 4/4. Its function is as follows. Catalyzes the conversion of 4-hydroxy-tetrahydrodipicolinate (HTPA) to tetrahydrodipicolinate. The sequence is that of 4-hydroxy-tetrahydrodipicolinate reductase from Limosilactobacillus fermentum (strain NBRC 3956 / LMG 18251) (Lactobacillus fermentum).